A 263-amino-acid chain; its full sequence is Small ribosomal subunit protein eS1 (263 aa).

Positions 235–254 are enriched in basic and acidic residues; the sequence is HGEGGGGKREAGDKSERPEG. The tract at residues 235–263 is disordered; the sequence is HGEGGGGKREAGDKSERPEGYEPPVQESV.

It belongs to the eukaryotic ribosomal protein eS1 family. As to quaternary structure, component of the small ribosomal subunit. Mature ribosomes consist of a small (40S) and a large (60S) subunit. The 40S subunit contains about 33 different proteins and 1 molecule of RNA (18S). The 60S subunit contains about 49 different proteins and 3 molecules of RNA (28S, 5.8S and 5S).

The protein localises to the cytoplasm. The sequence is that of Small ribosomal subunit protein eS1 from Bombyx mandarina (Wild silk moth).